We begin with the raw amino-acid sequence, 90 residues long: UPF0297 protein OEOE_1166 (90 aa).

It belongs to the UPF0297 family.

This chain is UPF0297 protein OEOE_1166, found in Oenococcus oeni (strain ATCC BAA-331 / PSU-1).